The following is a 356-amino-acid chain: Phospho-2-dehydro-3-deoxyheptonate aldolase, Tyr-sensitive (356 aa).

The protein belongs to the class-I DAHP synthase family.

The enzyme catalyses D-erythrose 4-phosphate + phosphoenolpyruvate + H2O = 7-phospho-2-dehydro-3-deoxy-D-arabino-heptonate + phosphate. It functions in the pathway metabolic intermediate biosynthesis; chorismate biosynthesis; chorismate from D-erythrose 4-phosphate and phosphoenolpyruvate: step 1/7. In terms of biological role, stereospecific condensation of phosphoenolpyruvate (PEP) and D-erythrose-4-phosphate (E4P) giving rise to 3-deoxy-D-arabino-heptulosonate-7-phosphate (DAHP). The chain is Phospho-2-dehydro-3-deoxyheptonate aldolase, Tyr-sensitive (aroF) from Salmonella typhi.